A 372-amino-acid polypeptide reads, in one-letter code: Tetraacyldisaccharide 4'-kinase (372 aa).

Threonine 65–threonine 72 provides a ligand contact to ATP. Residues glutamine 351–alanine 372 are disordered. A compositionally biased stretch (basic and acidic residues) spans glycine 360–alanine 372.

This sequence belongs to the LpxK family.

The catalysed reaction is a lipid A disaccharide + ATP = a lipid IVA + ADP + H(+). It functions in the pathway glycolipid biosynthesis; lipid IV(A) biosynthesis; lipid IV(A) from (3R)-3-hydroxytetradecanoyl-[acyl-carrier-protein] and UDP-N-acetyl-alpha-D-glucosamine: step 6/6. Functionally, transfers the gamma-phosphate of ATP to the 4'-position of a tetraacyldisaccharide 1-phosphate intermediate (termed DS-1-P) to form tetraacyldisaccharide 1,4'-bis-phosphate (lipid IVA). The protein is Tetraacyldisaccharide 4'-kinase of Cupriavidus metallidurans (strain ATCC 43123 / DSM 2839 / NBRC 102507 / CH34) (Ralstonia metallidurans).